The sequence spans 276 residues: Acyl-[acyl-carrier-protein]--UDP-N-acetylglucosamine O-acyltransferase (276 aa).

It belongs to the transferase hexapeptide repeat family. LpxA subfamily. As to quaternary structure, homotrimer.

Its subcellular location is the cytoplasm. The catalysed reaction is a (3R)-hydroxyacyl-[ACP] + UDP-N-acetyl-alpha-D-glucosamine = a UDP-3-O-[(3R)-3-hydroxyacyl]-N-acetyl-alpha-D-glucosamine + holo-[ACP]. It functions in the pathway glycolipid biosynthesis; lipid IV(A) biosynthesis; lipid IV(A) from (3R)-3-hydroxytetradecanoyl-[acyl-carrier-protein] and UDP-N-acetyl-alpha-D-glucosamine: step 1/6. Involved in the biosynthesis of lipid A, a phosphorylated glycolipid that anchors the lipopolysaccharide to the outer membrane of the cell. The sequence is that of Acyl-[acyl-carrier-protein]--UDP-N-acetylglucosamine O-acyltransferase from Rippkaea orientalis (strain PCC 8801 / RF-1) (Cyanothece sp. (strain PCC 8801)).